Consider the following 582-residue polypeptide: MKGSIPRTFIDDLLAKTDIVELVNSRVKLKKAGRDYQACCPFHHEKTPSFTVSQKKQFYHCFGCGAHGNAISFLMEYDKLEFVEAIEELAGMLGLEIPRENKPHFHGKQINLQTKRNLYELMQEIAQFYQQQLAQHIPAQSYLQQRGLSPEVISRFQIGFVPNSFDAVLQRFGQQKEDQQKLFDLGMLSRSEQGKIYDRFRHRIMFPIRDRRGKTIAFGGRVLGDEKPKYLNSPESATYHKGNELYGLYEALQANESPEMLLVVEGYMDVVALAQFGVDYAVASLGTATTAEQIQLLFRSTEQAICCYDGDRAGREAAWRAFENALPYLEDGRQLKFVFLPDGEDPDSFIRQHGKASFEQYMQKALSLSEFLFTSLAPQVDFSSKEGKTKLAALAVPLIKKIPGDMLRLSLRNTLAQKLGILDQAQLESLIPSYSEMKITASPQPVKRTPMRVLIGLLLQNPELAQLVPDLSPLRTLNEPGLDLLEKLTALCQEKVGITTGQILEYWRDTEHSKALEILASWNHLVEDTQIEETFKSTLRYLYFQLIEHEIDLLIAKDRSEGLNMNERKKLTQLLVKKQQKA.

The CHC2-type zinc-finger motif lies at 40–64 (CPFHHEKTPSFTVSQKKQFYHCFGC). Residues 259–341 (EMLLVVEGYM…GRQLKFVFLP (83 aa)) form the Toprim domain. E265, D309, and D311 together coordinate Mg(2+).

It belongs to the DnaG primase family. Monomer. Interacts with DnaB. It depends on Zn(2+) as a cofactor. Requires Mg(2+) as cofactor.

The catalysed reaction is ssDNA + n NTP = ssDNA/pppN(pN)n-1 hybrid + (n-1) diphosphate.. Functionally, RNA polymerase that catalyzes the synthesis of short RNA molecules used as primers for DNA polymerase during DNA replication. The sequence is that of DNA primase from Pasteurella multocida (strain Pm70).